We begin with the raw amino-acid sequence, 713 residues long: Transcription activator of gluconeogenesis CPC735_053490 (713 aa).

Positions 1 to 70 (MTANAINGPV…NAKDPLRPRR (70 aa)) are disordered. Over residues 19–56 (GDNNKSADTTMADQGTRPESQPQGQNNGAKPQNGQTKP) the composition is skewed to polar residues. The segment at residues 77–105 (CFACQRAHLTCGDERPCQRCIKRGIQNAC) is a DNA-binding region (zn(2)-C6 fungal-type). The segment covering 145–159 (PLTRNGSNSKTNFYP) has biased composition (polar residues). 4 disordered regions span residues 145–229 (PLTR…ASGQ), 274–318 (GAGE…LFGD), 541–564 (GGSS…GMDI), and 623–665 (GTTS…QRKW). Positions 160–171 (QQQSSFNNFYQN) are enriched in low complexity. Positions 191-212 (FPSQSPVSPTFNMTANPAASGN) are enriched in polar residues. A compositionally biased stretch (low complexity) spans 213–229 (QGLPSSLSASNSNASGQ). Composition is skewed to polar residues over residues 295-312 (SGTY…TGQP), 541-558 (GGSS…SFTP), and 649-659 (GASNGQSQHSL).

Belongs to the ERT1/acuK family.

Its subcellular location is the nucleus. In terms of biological role, transcription factor which regulates nonfermentable carbon utilization. Activator of gluconeogenetic genes. The sequence is that of Transcription activator of gluconeogenesis CPC735_053490 from Coccidioides posadasii (strain C735) (Valley fever fungus).